A 421-amino-acid chain; its full sequence is MAESNQNTDGAVEEGEDENTGDSNLQMELSAFRAKWMSELQPSSGGQRSFSRNAELRRRQETAKEEKARELFLKAVEEEQNGAVYEAIKYYKSAMQLVPDIEFKINYSRTPDPERGGSYLESSENNREIDDLLTYFQHQLTLGNDAMKLCEHETETSQVHISALPFEVLMYIFRWVVSCDLDLRALEQLSLVCRGFYICARDPEIWRSACLRVWGRSCTKMLPYSSWREMFLERPRVRFDGVYISKTSYIRQGEESLDGFYRAWHQVEYYRYLRFFPDGQVMMLTTPEDPLVTVPRLRSKNSRMDSIMFGHYRLSQDTDNQTKVYVVVSKRKEEKVSEYQRSRFCRRNPVPEAERSFHVGLQLSSGGRQRFNKLVWIHHSCHITYRSTGETVVTAFDVDKMYTPLFFARVKSYTAFSERPL.

The interval 1-63 is disordered; sequence MAESNQNTDG…AELRRRQETA (63 aa). The span at 11–20 shows a compositional bias: acidic residues; the sequence is AVEEGEDENT. The segment covering 40 to 52 has biased composition (polar residues); that stretch reads LQPSSGGQRSFSR. The segment covering 54-63 has biased composition (basic and acidic residues); it reads AELRRRQETA. Residues 68-101 form a TPR repeat; sequence ARELFLKAVEEEQNGAVYEAIKYYKSAMQLVPDI. One can recognise an F-box domain in the interval 158–209; the sequence is QVHISALPFEVLMYIFRWVVSCDLDLRALEQLSLVCRGFYICARDPEIWRSA.

In terms of assembly, part of the SCF (SKP1-CUL1-F-box) E3 ubiquitin-protein ligase complex SCF(fbxo9).

Its subcellular location is the cytoplasm. It participates in protein modification; protein ubiquitination. Its function is as follows. Substrate recognition component of a SCF (SKP1-CUL1-F-box protein) E3 ubiquitin-protein ligase complex which mediates the ubiquitination and subsequent proteasomal degradation of target proteins and acts as a regulator of mTOR signaling. In Danio rerio (Zebrafish), this protein is F-box only protein 9 (fbxo9).